A 319-amino-acid polypeptide reads, in one-letter code: tRNA uridine(34) hydroxylase (319 aa).

Residues 127-221 (KQEDTVIIDA…YGKDPEVQGE (95 aa)) form the Rhodanese domain. The Cysteine persulfide intermediate role is filled by cysteine 181.

This sequence belongs to the TrhO family.

It catalyses the reaction uridine(34) in tRNA + AH2 + O2 = 5-hydroxyuridine(34) in tRNA + A + H2O. Functionally, catalyzes oxygen-dependent 5-hydroxyuridine (ho5U) modification at position 34 in tRNAs. The polypeptide is tRNA uridine(34) hydroxylase (Bacillus cereus (strain Q1)).